Here is a 488-residue protein sequence, read N- to C-terminus: 2,3-bisphosphoglycerate-independent phosphoglycerate mutase (488 aa).

Ser10 (phosphoserine intermediate) is an active-site residue. Residue Ser10 coordinates Mn(2+). Substrate is bound by residues His69, 99-100, Arg135, Arg142, 215-218, and Lys290; these read RD and RADR. Asp359, His363, Asp400, His401, and His430 together coordinate Mn(2+).

The protein belongs to the BPG-independent phosphoglycerate mutase family. As to quaternary structure, monomer. Mn(2+) serves as cofactor.

Its subcellular location is the cytoplasm. The catalysed reaction is (2R)-2-phosphoglycerate = (2R)-3-phosphoglycerate. Its pathway is carbohydrate degradation; glycolysis; pyruvate from D-glyceraldehyde 3-phosphate: step 3/5. Its function is as follows. Catalyzes the interconversion of 2-phosphoglycerate and 3-phosphoglycerate. This Prunus dulcis (Almond) protein is 2,3-bisphosphoglycerate-independent phosphoglycerate mutase.